We begin with the raw amino-acid sequence, 173 residues long: Bifunctional protein PyrR (173 aa).

A PRPP-binding motif is present at residues 93 to 105; that stretch reads IILVDDVLYTGRT.

Belongs to the purine/pyrimidine phosphoribosyltransferase family. PyrR subfamily. As to quaternary structure, homodimer and homohexamer; in equilibrium.

The catalysed reaction is UMP + diphosphate = 5-phospho-alpha-D-ribose 1-diphosphate + uracil. Regulates transcriptional attenuation of the pyrimidine nucleotide (pyr) operon by binding in a uridine-dependent manner to specific sites on pyr mRNA. This disrupts an antiterminator hairpin in the RNA and favors formation of a downstream transcription terminator, leading to a reduced expression of downstream genes. In terms of biological role, also displays a weak uracil phosphoribosyltransferase activity which is not physiologically significant. This Streptococcus equi subsp. zooepidemicus (strain MGCS10565) protein is Bifunctional protein PyrR.